Consider the following 560-residue polypeptide: Glutamate--tRNA ligase (560 aa).

A 'HIGH' region motif is present at residues 108–118; sequence PNPSGPLHLGH.

Belongs to the class-I aminoacyl-tRNA synthetase family. Glutamate--tRNA ligase type 2 subfamily.

The protein localises to the cytoplasm. It catalyses the reaction tRNA(Glu) + L-glutamate + ATP = L-glutamyl-tRNA(Glu) + AMP + diphosphate. In terms of biological role, catalyzes the attachment of glutamate to tRNA(Glu) in a two-step reaction: glutamate is first activated by ATP to form Glu-AMP and then transferred to the acceptor end of tRNA(Glu). The protein is Glutamate--tRNA ligase of Methanocorpusculum labreanum (strain ATCC 43576 / DSM 4855 / Z).